An 861-amino-acid chain; its full sequence is ToMV resistance protein Tm-2(GCR236) (861 aa).

A coiled-coil region spans residues 63–83 (VKNLLKDIQELAGDVEDLLDD). The 227-residue stretch at 162 to 388 (DDFNMLQAKL…LESMGHKVQD (227 aa)) folds into the NB-ARC domain. 185 to 192 (GMPGLGKT) serves as a coordination point for ATP. LRR repeat units follow at residues 225 to 248 (LDIAKQIGLTEQKMKENLEDNLRS), 305 to 327 (LHALQPLESEKSFELFTKKIFNF), 388 to 411 (DGCAKVLALSYNDLPIASRPCFLY), 449 to 472 (LAEDVLNDLVSRNLIQLAKRTYNG), 510 to 536 (VARLRRITFYSDNVMIEFFRSNPKLEK), 585 to 608 (MTCLRYLRLEGNICGKLPNSIVKL), 609 to 631 (TRLETIDIDRRSLIQPPSGVWES), 652 to 680 (ISSFYPNIYSLHPNNLQTLMWIPDKFFEP), 689 to 710 (LRKLGILGVSNSTVKMLSIFSP), 712 to 735 (LKALEVLKLSFSSDPSEQIKLSSY), 736 to 758 (PHIAKLHLNVNRTMALNSQSFPP), 784 to 810 (LRKLKMFICKYNEEKMDLSGEANGYSF), and 811 to 835 (PQLEVLHIHSPNGLSEVTCTDDVSM).

It belongs to the disease resistance NB-LRR family. In terms of assembly, (Microbial infection) Interacts with tobamoviruses mouvement protein at the plasma membrane; this interaction triggers defense responses leading to programmed cell death. As to quaternary structure, binds to HSP90 proteins; this interaction seems required for defense responses toward tobamoviruses.

Its subcellular location is the cell membrane. In terms of biological role, inhibitor of viral mouvements which confers resistance to some tobamoviruses including tomato mosaic virus (ToMV) (e.g. isolates L, W3 and SL-1) and tobacco mosaic virus (TMV), but not to resistance-breaking isolates (e.g. B7, LT1, LII, Ltbl, ToMV2, and ToMV1-2) ToMV and tomato brown rugose fruit virus (ToBRFV). Elicits a hypersensitive reaction in response to avirulent (Avr) movement proteins from resistance inducing tobamoviruses (e.g. ToMV and TMV) strains, thus leading to programmed cell death. The protein is ToMV resistance protein Tm-2(GCR236) of Solanum lycopersicum (Tomato).